We begin with the raw amino-acid sequence, 259 residues long: 3-deoxy-manno-octulosonate cytidylyltransferase (259 aa).

Belongs to the KdsB family.

It is found in the cytoplasm. It carries out the reaction 3-deoxy-alpha-D-manno-oct-2-ulosonate + CTP = CMP-3-deoxy-beta-D-manno-octulosonate + diphosphate. It participates in nucleotide-sugar biosynthesis; CMP-3-deoxy-D-manno-octulosonate biosynthesis; CMP-3-deoxy-D-manno-octulosonate from 3-deoxy-D-manno-octulosonate and CTP: step 1/1. It functions in the pathway bacterial outer membrane biogenesis; lipopolysaccharide biosynthesis. Activates KDO (a required 8-carbon sugar) for incorporation into bacterial lipopolysaccharide in Gram-negative bacteria. The polypeptide is 3-deoxy-manno-octulosonate cytidylyltransferase (Xanthomonas oryzae pv. oryzae (strain KACC10331 / KXO85)).